Reading from the N-terminus, the 263-residue chain is Polyglutamine-binding protein 1 (263 aa).

In terms of domain architecture, WW spans 46–80 (EGLPPSWYKVFDPSCGLPYYWNVETDLVSWLSPHD). The tract at residues 94–263 (NSNADAEDKS…AEASRSKQQD (170 aa)) is disordered. Residues 99–173 (AEDKSERNLE…DKADREDGKD (75 aa)) are compositionally biased toward basic and acidic residues. One copy of the 1-1; approximate repeat lies at 104-110 (ERNLEKV). The tract at residues 104–138 (ERNLEKVDRNHEKSDRSHEKPDRSHEKADRNHEKS) is 5 X 7 AA approximate tandem repeats of D-R-[NS]-H-E-K-S. The 1-2 repeat unit spans residues 111 to 117 (DRNHEKS). A 1-3; approximate repeat occupies 118 to 124 (DRSHEKP). Residues 125-131 (DRSHEKA) form a 1-4; approximate repeat. A run of 10 repeats spans residues 132–138 (DRNHEKS), 139–140 (DR), 141–142 (ER), 143–144 (ER), 150–151 (DR), 152–153 (ER), 154–155 (DR), 156–157 (DR), 158–159 (ER), and 160–161 (ER). The tract at residues 139–144 (DRERER) is 3 X 2 AA tandem repeats of [DE]-R. The interval 150 to 161 (DRERDRDRERER) is 6 X 2 AA tandem repeats of [DE]-R. The tract at residues 243 to 253 (YPSPGAVLRAN) is important for interaction with TXNL4A. S245 is modified (phosphoserine).

Interacts with POU3F2/Brn-2, ATXN1, TXNL4A, HTT and AR. Interaction with ATXN1 correlates positively with the length of the polyglutamine tract. Interacts with RNA polymerase II large subunit in a phosphorylation-dependent manner. Forms a ternary complex with ATXN1 mutant and phosphorylated RNA polymerase II. Interacts (via C-terminus) with TXNL4A and CD2BP2. Interacts (via WW domain) with ATN1 and SF3B1, and may interact with additional splice factors. Interacts (via WW domain) with WBP11; Leading to reduce interaction between PQBP1 and TXNL4A. Interacts with CAPRIN1. Interacts with DDX1. Interacts with SFPQ. Interacts with KHSRP.

It is found in the nucleus. The protein resides in the nucleus speckle. It localises to the cytoplasmic granule. In terms of biological role, intrinsically disordered protein that acts as a scaffold, and which is involved in different processes, such as pre-mRNA splicing, transcription regulation, innate immunity and neuron development. Interacts with splicing-related factors via the intrinsically disordered region and regulates alternative splicing of target pre-mRNA species. May suppress the ability of POU3F2 to transactivate the DRD1 gene in a POU3F2 dependent manner. Can activate transcription directly or via association with the transcription machinery. May be involved in ATXN1 mutant-induced cell death. The interaction with ATXN1 mutant reduces levels of phosphorylated RNA polymerase II large subunit. Involved in the assembly of cytoplasmic stress granule, possibly by participating in the transport of neuronal RNA granules. Also acts as an innate immune sensor of infection by retroviruses, by detecting the presence of reverse-transcribed DNA in the cytosol. Directly binds retroviral reverse-transcribed DNA in the cytosol and interacts with CGAS, leading to activate the cGAS-STING signaling pathway, triggering type-I interferon production. The chain is Polyglutamine-binding protein 1 (Pqbp1) from Rattus norvegicus (Rat).